The following is a 63-amino-acid chain: Sec-independent protein translocase protein TatA (63 aa).

A helical membrane pass occupies residues 1-21 (MGGLSVGSVVLIALVALLIFG).

Belongs to the TatA/E family. As to quaternary structure, forms a complex with TatC.

The protein localises to the cell membrane. Functionally, part of the twin-arginine translocation (Tat) system that transports large folded proteins containing a characteristic twin-arginine motif in their signal peptide across membranes. TatA could form the protein-conducting channel of the Tat system. The sequence is that of Sec-independent protein translocase protein TatA from Shouchella clausii (strain KSM-K16) (Alkalihalobacillus clausii).